The primary structure comprises 312 residues: Putative S-adenosyl-L-methionine-dependent methyltransferase Mjls_0078 (312 aa).

S-adenosyl-L-methionine contacts are provided by residues D134 and 163-164 (DL).

Belongs to the UPF0677 family.

In terms of biological role, exhibits S-adenosyl-L-methionine-dependent methyltransferase activity. This chain is Putative S-adenosyl-L-methionine-dependent methyltransferase Mjls_0078, found in Mycobacterium sp. (strain JLS).